The chain runs to 173 residues: MMTKSNTKKSDKDLWATPWWVFHYAEQYFNIKFDLDTCAMEHNTKVKNFITPEQNTLTADWQGRYCWMNPPYSNPLPFVLRAISQSVLHNKTVVMLLNVDGSTKWFDMCVRNAKEIVYITNSRIPFINNETGEETDQNNKPQMLVLFEPKAPYGSLKSSYVSLHEMKEKGMLQ.

It belongs to the N(4)/N(6)-methyltransferase family.

It catalyses the reaction a 2'-deoxyadenosine in DNA + S-adenosyl-L-methionine = an N(6)-methyl-2'-deoxyadenosine in DNA + S-adenosyl-L-homocysteine + H(+). Functionally, methyltransferase that methylates adenine residues in the ssDNA and dsDNA sequence 5'-GATC-3'. May prevent degradation of viral DNA by the host restriction-modification antiviral defense system. The polypeptide is DNA N-6-adenine-methyltransferase (Haemophilus influenzae (Bacteriophage HP1)).